A 288-amino-acid chain; its full sequence is Shikimate dehydrogenase (NADP(+)) (288 aa).

Shikimate-binding positions include 15–17 and Thr64; that span reads SKS. The Proton acceptor role is filled by Lys68. NADP(+) is bound at residue Glu83. Shikimate-binding residues include Asn92 and Asp117. Residues 141–145, 165–170, and Met232 each bind NADP(+); these read GAGGA and NRTVSK. Residue Tyr234 participates in shikimate binding. An NADP(+)-binding site is contributed by Gly254.

This sequence belongs to the shikimate dehydrogenase family. Homodimer.

It catalyses the reaction shikimate + NADP(+) = 3-dehydroshikimate + NADPH + H(+). Its pathway is metabolic intermediate biosynthesis; chorismate biosynthesis; chorismate from D-erythrose 4-phosphate and phosphoenolpyruvate: step 4/7. Involved in the biosynthesis of the chorismate, which leads to the biosynthesis of aromatic amino acids. Catalyzes the reversible NADPH linked reduction of 3-dehydroshikimate (DHSA) to yield shikimate (SA). In Psychrobacter cryohalolentis (strain ATCC BAA-1226 / DSM 17306 / VKM B-2378 / K5), this protein is Shikimate dehydrogenase (NADP(+)).